Here is a 547-residue protein sequence, read N- to C-terminus: Intercellular adhesion molecule 3 (547 aa).

An N-terminal signal peptide occupies residues 1–29 (MATMVPSVLWPRACWTLLVCCLLTPGVQG). The Extracellular segment spans residues 30–485 (QEFLLRVEPQ…VMDIEAGSSH (456 aa)). Residues 46-103 (GGSLFVNCSTDCPSSEKIALETSLSKELVASGMGWAAFNLSNVTGNSRILCSVYCNGS) form the Ig-like C2-type 1 domain. Residues Asn-52, Asn-84, Asn-87, Asn-101, Asn-110, and Asn-134 are each glycosylated (N-linked (GlcNAc...) asparagine). Cystine bridges form between Cys-53–Cys-96 and Cys-57–Cys-100. Positions 132 to 197 (GQNFTLRCQV…FSCRTELDMQ (66 aa)) constitute an Ig-like C2-type 2 domain. Residues Cys-139 and Cys-190 are joined by a disulfide bond. N-linked (GlcNAc...) asparagine glycans are attached at residues Asn-206, Asn-264, Asn-295, Asn-308, Asn-320, Asn-363, Asn-389, Asn-453, and Asn-457. Residues 234–301 (ETSWPVDCTL…IVCNVTLGGE (68 aa)) enclose the Ig-like C2-type 3 domain. A disulfide bridge links Cys-241 with Cys-294. One can recognise an Ig-like C2-type 4 domain in the interval 329–382 (GSTVTVSCMAGARVQVTLDGVPAAAPGQPAQLQLNATESDDGRSFFCSATLEVD). The cysteines at positions 336 and 375 are disulfide-linked. The region spanning 416–469 (KTRHVLQCQARGNPYPELRCLKEGSSREVPVGIPFFVNVTHNGTYQCQASSSRG) is the Ig-like C2-type 5 domain. The cysteines at positions 423 and 462 are disulfide-linked. A helical membrane pass occupies residues 486 to 510 (FVPVFVAVLLTLGVVTIVLALMYVF). At 511-547 (REHQRSGSYHVREESTYLPLTSMQPTEAMGEEPSRAE) the chain is on the cytoplasmic side.

The protein belongs to the immunoglobulin superfamily. ICAM family. In terms of assembly, interacts with moesin/MSN. Post-translationally, upon stimulation by a physiologic stimuli becomes rapidly and transiently phosphorylated on serine residues. N-glycosylated; glycans consist of a mixture of tri- and tetra-antennary complex-type chains and high-mannose chains. In terms of tissue distribution, leukocytes.

It is found in the membrane. ICAM proteins are ligands for the leukocyte adhesion protein LFA-1 (integrin alpha-L/beta-2). ICAM3 is also a ligand for integrin alpha-D/beta-2. In association with integrin alpha-L/beta-2, contributes to apoptotic neutrophil phagocytosis by macrophages. The chain is Intercellular adhesion molecule 3 (ICAM3) from Homo sapiens (Human).